The following is a 206-amino-acid chain: Small ribosomal subunit protein uS4 (206 aa).

Positions 96–156 (GRLDNVVYRM…EKSKKQARIK (61 aa)) constitute an S4 RNA-binding domain.

The protein belongs to the universal ribosomal protein uS4 family. In terms of assembly, part of the 30S ribosomal subunit. Contacts protein S5. The interaction surface between S4 and S5 is involved in control of translational fidelity.

Functionally, one of the primary rRNA binding proteins, it binds directly to 16S rRNA where it nucleates assembly of the body of the 30S subunit. In terms of biological role, with S5 and S12 plays an important role in translational accuracy. The sequence is that of Small ribosomal subunit protein uS4 from Haemophilus influenzae (strain ATCC 51907 / DSM 11121 / KW20 / Rd).